The primary structure comprises 122 residues: Ribosome-binding factor A (122 aa).

It belongs to the RbfA family. Monomer. Binds 30S ribosomal subunits, but not 50S ribosomal subunits or 70S ribosomes.

It localises to the cytoplasm. Functionally, one of several proteins that assist in the late maturation steps of the functional core of the 30S ribosomal subunit. Associates with free 30S ribosomal subunits (but not with 30S subunits that are part of 70S ribosomes or polysomes). Required for efficient processing of 16S rRNA. May interact with the 5'-terminal helix region of 16S rRNA. The sequence is that of Ribosome-binding factor A from Polynucleobacter necessarius subsp. necessarius (strain STIR1).